Reading from the N-terminus, the 154-residue chain is Cytochrome c-type biogenesis protein CcmE (154 aa).

At 1 to 8 (MHPQRKQR) the chain is on the cytoplasmic side. A helical; Signal-anchor for type II membrane protein transmembrane segment spans residues 9 to 29 (LMIVLFIVVFSSLAVGLIAYA). Topologically, residues 30-154 (LRENINLFYP…ATCGGLNYGA (125 aa)) are periplasmic. The heme site is built by His124 and Tyr128.

It belongs to the CcmE/CycJ family.

The protein localises to the cell inner membrane. In terms of biological role, heme chaperone required for the biogenesis of c-type cytochromes. Transiently binds heme delivered by CcmC and transfers the heme to apo-cytochromes in a process facilitated by CcmF and CcmH. This is Cytochrome c-type biogenesis protein CcmE from Cellvibrio japonicus (strain Ueda107) (Pseudomonas fluorescens subsp. cellulosa).